Consider the following 216-residue polypeptide: Probable glutamine ABC transporter permease protein GlnM (216 aa).

The ABC transmembrane type-1 domain maps to 17–205; that stretch reads FYHTLLASVI…VLTIPLSIGV (189 aa). Transmembrane regions (helical) follow at residues 21–41, 63–83, 85–105, 132–152, and 181–201; these read LLASVIALAGSFVLGVAVAVM, IPLLLITFVFYFGLPNAGLRL, GFQAGTVALTIYTSAFIAEAI, LHIILPQAIKIVIPPLGNQFL, and LVVFDVYIFVALFYLVLTIPL.

The protein belongs to the binding-protein-dependent transport system permease family. The complex is composed of two ATP-binding proteins (GlnQ), two transmembrane proteins (GlnM and GlnP) and a solute-binding protein (GlnH).

It localises to the cell membrane. In terms of biological role, part of the ABC transporter complex GlnHMPQ involved in glutamine transport. Probably responsible for the translocation of the substrate across the membrane. This chain is Probable glutamine ABC transporter permease protein GlnM (glnM), found in Bacillus subtilis (strain 168).